A 1297-amino-acid polypeptide reads, in one-letter code: Phosphoribosylformylglycinamidine synthase (1297 aa).

Positions 301–329 (TAISPFPGAATGSGGEIRDEGATGRGAKP) are disordered. An ATP-binding site is contributed by 308-319 (GAATGSGGEIRD). The Mg(2+) site is built by aspartate 680, glutamate 719, asparagine 723, and aspartate 887. Serine 889 provides a ligand contact to ATP. The 253-residue stretch at 1045 to 1297 (IAILREQGVN…RLFRNARMVF (253 aa)) folds into the Glutamine amidotransferase type-1 domain. Catalysis depends on cysteine 1138, which acts as the Nucleophile. Residues histidine 1263 and glutamate 1265 contribute to the active site.

In the N-terminal section; belongs to the FGAMS family. Monomer.

The protein resides in the cytoplasm. The catalysed reaction is N(2)-formyl-N(1)-(5-phospho-beta-D-ribosyl)glycinamide + L-glutamine + ATP + H2O = 2-formamido-N(1)-(5-O-phospho-beta-D-ribosyl)acetamidine + L-glutamate + ADP + phosphate + H(+). It functions in the pathway purine metabolism; IMP biosynthesis via de novo pathway; 5-amino-1-(5-phospho-D-ribosyl)imidazole from N(2)-formyl-N(1)-(5-phospho-D-ribosyl)glycinamide: step 1/2. Functionally, phosphoribosylformylglycinamidine synthase involved in the purines biosynthetic pathway. Catalyzes the ATP-dependent conversion of formylglycinamide ribonucleotide (FGAR) and glutamine to yield formylglycinamidine ribonucleotide (FGAM) and glutamate. This chain is Phosphoribosylformylglycinamidine synthase, found in Haemophilus influenzae (strain ATCC 51907 / DSM 11121 / KW20 / Rd).